The following is a 497-amino-acid chain: ADP-dependent glucokinase (497 aa).

Positions 1 to 22 (MALWRGSAYAGFLALAVGCVFL) are cleaved as a signal peptide. The ADPK domain maps to 52–497 (SPEGRLAAAW…LFYSEVHPHL (446 aa)). Positions 297, 328, and 481 each coordinate Mg(2+). D481 functions as the Proton acceptor in the catalytic mechanism.

The protein belongs to the ADP-dependent glucokinase family. As to quaternary structure, monomer. It depends on Mg(2+) as a cofactor.

It is found in the secreted. It carries out the reaction D-glucose + ADP = D-glucose 6-phosphate + AMP + H(+). Its pathway is carbohydrate degradation; glycolysis. Functionally, catalyzes the phosphorylation of D-glucose to D-glucose 6-phosphate using ADP as the phosphate donor. GDP and CDP can replace ADP, but with reduced efficiency. The chain is ADP-dependent glucokinase (ADPGK) from Bos taurus (Bovine).